The primary structure comprises 146 residues: Large ribosomal subunit protein uL15 (146 aa).

The segment covering 1–10 (MTIKLHDLKP) has biased composition (basic and acidic residues). Residues 1 to 52 (MTIKLHDLKPARGSKTPRTRVGRGEGSKGKTAGRGTKGTKARKNVPVTFEGG) are disordered.

The protein belongs to the universal ribosomal protein uL15 family. Part of the 50S ribosomal subunit.

Its function is as follows. Binds to the 23S rRNA. The polypeptide is Large ribosomal subunit protein uL15 (Mycolicibacterium paratuberculosis (strain ATCC BAA-968 / K-10) (Mycobacterium paratuberculosis)).